Here is a 408-residue protein sequence, read N- to C-terminus: MQIPSKLKPYYENIAFEQEDSKMIINLGPQHPSAHGNLRLILELDGEQVVKARPCIGYMHRGMEKMAENMIYQEFIPTTDRMDYIAASANNYAYCAAVEKLCGLEIPRRAAVIRMILLELNRIASHLLWLATHALDIGAMSVFLYCFREREYVLDLIEKYCGARLTHSSMRIGGVMLDLPENYLEEMLVFCDKFPNDLKDYEDLLDDNRIWRLRTENVGVVTKEQALNWGCTGVMLRGSGIKYDIRKEEPYLLYNEVEFGVPYATQGDSYARYKVYMQEFRESLKILRQCATLYKDTPPEILATHPEYVSASKEQILTQNYSLMQHFVLITQGLKPPKGEVYVPTESPKGELGFFIHSDGTGRPYRLKARTPSYWHCAFFEEMLVGTYLADVVAIMGNVNIVLGEIDR.

Belongs to the complex I 49 kDa subunit family. NDH-1 is composed of 14 different subunits. Subunits NuoB, C, D, E, F, and G constitute the peripheral sector of the complex.

It localises to the cell inner membrane. The enzyme catalyses a quinone + NADH + 5 H(+)(in) = a quinol + NAD(+) + 4 H(+)(out). Functionally, NDH-1 shuttles electrons from NADH, via FMN and iron-sulfur (Fe-S) centers, to quinones in the respiratory chain. The immediate electron acceptor for the enzyme in this species is believed to be ubiquinone. Couples the redox reaction to proton translocation (for every two electrons transferred, four hydrogen ions are translocated across the cytoplasmic membrane), and thus conserves the redox energy in a proton gradient. This chain is NADH-quinone oxidoreductase subunit D, found in Campylobacter jejuni subsp. jejuni serotype O:6 (strain 81116 / NCTC 11828).